The chain runs to 728 residues: Double-strand break repair protein mre-11 (728 aa).

The span at 1-12 (MCGSDDSFDDFV) shows a compositional bias: acidic residues. Residues 1–45 (MCGSDDSFDDFVPDSQEPASSRTRNQDHLDDDEVPCSQRPDAAND) are disordered. The Mn(2+) site is built by D73, H75, D113, and N181. The active-site Proton donor is H182. Mn(2+) is bound by residues H269, H301, and H303. The disordered stretch occupies residues 601–728 (KNPVADVEME…PSKKRDLSFF (128 aa)). The span at 607–616 (VEMEEDEDDP) shows a compositional bias: acidic residues. Residues 622–632 (PQSTSRTNYAS) are compositionally biased toward polar residues. Residues 634-645 (SEDEVANSDEEM) are compositionally biased toward acidic residues.

It belongs to the MRE11/RAD32 family. As to quaternary structure, component of the MRN complex composed of two heterodimers rad-50 and mre-11 associated with a single nbs-1. Mn(2+) is required as a cofactor.

The protein resides in the nucleus. Its subcellular location is the chromosome. Functionally, core component of the MRN complex, which plays a central role in double-strand break (DSB) repair, DNA recombination, maintenance of telomere integrity and meiosis. The MRN complex is involved in the repair of DNA double-strand breaks (DSBs) via homologous recombination (HR), an error-free mechanism which primarily occurs during S and G2 phases. The complex (1) mediates the end resection of damaged DNA, which generates proper single-stranded DNA, a key initial steps in HR, and is (2) required for the recruitment of other repair factors and efficient activation of ATM and ATR upon DNA damage. Within the MRN complex, mre-11 possesses both single-strand endonuclease activity and double-strand-specific 3'-5' exonuclease activity. Mre-11 first endonucleolytically cleaves the 5' strand at DNA DSB ends to prevent non-homologous end joining (NHEJ) and licence HR. It then generates a single-stranded DNA gap via 3' to 5' exonucleolytic degradation, which is required for single-strand invasion and recombination. Required for meiotic crossing over and chiasma formation. Pachytene morphology and homolog pairing are normal. Vital in long term for maintenance of reproductive capacity of subsequent generations. The polypeptide is Double-strand break repair protein mre-11 (Caenorhabditis elegans).